The sequence spans 406 residues: 2,3-bisphosphoglycerate-independent phosphoglycerate mutase (406 aa).

Belongs to the BPG-independent phosphoglycerate mutase family. A-PGAM subfamily.

The catalysed reaction is (2R)-2-phosphoglycerate = (2R)-3-phosphoglycerate. The protein operates within carbohydrate degradation; glycolysis; pyruvate from D-glyceraldehyde 3-phosphate: step 3/5. Functionally, catalyzes the interconversion of 2-phosphoglycerate and 3-phosphoglycerate. The protein is 2,3-bisphosphoglycerate-independent phosphoglycerate mutase of Methanococcus maripaludis (strain C7 / ATCC BAA-1331).